The following is a 201-amino-acid chain: Peptidyl-tRNA hydrolase (201 aa).

Y15 is a tRNA binding site. The active-site Proton acceptor is the H20. TRNA-binding residues include Y66, N68, and N114.

Belongs to the PTH family. In terms of assembly, monomer.

The protein resides in the cytoplasm. The catalysed reaction is an N-acyl-L-alpha-aminoacyl-tRNA + H2O = an N-acyl-L-amino acid + a tRNA + H(+). Hydrolyzes ribosome-free peptidyl-tRNAs (with 1 or more amino acids incorporated), which drop off the ribosome during protein synthesis, or as a result of ribosome stalling. Functionally, catalyzes the release of premature peptidyl moieties from peptidyl-tRNA molecules trapped in stalled 50S ribosomal subunits, and thus maintains levels of free tRNAs and 50S ribosomes. The polypeptide is Peptidyl-tRNA hydrolase (Burkholderia mallei (strain ATCC 23344)).